Consider the following 181-residue polypeptide: Peptidyl-tRNA hydrolase (181 aa).

Residue Tyr-14 participates in tRNA binding. His-19 (proton acceptor) is an active-site residue. TRNA is bound by residues Tyr-62, Asn-64, and Asn-108.

Belongs to the PTH family. As to quaternary structure, monomer.

It is found in the cytoplasm. The catalysed reaction is an N-acyl-L-alpha-aminoacyl-tRNA + H2O = an N-acyl-L-amino acid + a tRNA + H(+). In terms of biological role, hydrolyzes ribosome-free peptidyl-tRNAs (with 1 or more amino acids incorporated), which drop off the ribosome during protein synthesis, or as a result of ribosome stalling. Catalyzes the release of premature peptidyl moieties from peptidyl-tRNA molecules trapped in stalled 50S ribosomal subunits, and thus maintains levels of free tRNAs and 50S ribosomes. This is Peptidyl-tRNA hydrolase from Campylobacter jejuni subsp. jejuni serotype O:23/36 (strain 81-176).